The sequence spans 186 residues: Peptidyl-tRNA hydrolase (186 aa).

Tyr-14 is a binding site for tRNA. The Proton acceptor role is filled by His-19. Positions 64, 66, and 112 each coordinate tRNA.

The protein belongs to the PTH family. As to quaternary structure, monomer.

The protein resides in the cytoplasm. It catalyses the reaction an N-acyl-L-alpha-aminoacyl-tRNA + H2O = an N-acyl-L-amino acid + a tRNA + H(+). In terms of biological role, hydrolyzes ribosome-free peptidyl-tRNAs (with 1 or more amino acids incorporated), which drop off the ribosome during protein synthesis, or as a result of ribosome stalling. Functionally, catalyzes the release of premature peptidyl moieties from peptidyl-tRNA molecules trapped in stalled 50S ribosomal subunits, and thus maintains levels of free tRNAs and 50S ribosomes. This Bacillus anthracis protein is Peptidyl-tRNA hydrolase.